A 390-amino-acid chain; its full sequence is MAQRYDDLPHYGGMDGVGIPSTMYGDPHAARSMQPVHHLNHGPPLHSHQYPHTAHTNAMAPSMGSSVNDALKRDKDAIYGHPLFPLLALIFEKCELATCTPREPGVAGGDVCSSESFNEDIAVFAKQIRAEKPLFSSNPELDNLMIQAIQVLRFHLLELEKVHELCDNFCHRYISCLKGKMPIDLVIDDREGGSKSDSEDITRSANLTDQPSWNRDHDDTASTRSGGTPGPSSGGHTSHSGDNSSEQGDGLDNSVASPSTGDDDDPDKDKKRHKKRGIFPKVATNIMRAWLFQHLTHPYPSEEQKKQLAQDTGLTILQVNNWFINARRRIVQPMIDQSNRAVSQGTPYNPDGQPMGGFVMDGQQHMGIRAPGPMSGMGMNMGMEGQWHYM.

The MEIS N-terminal domain maps to 108 to 192; that stretch reads GGDVCSSESF…IDLVIDDREG (85 aa). A compositionally biased stretch (basic and acidic residues) spans 190–202; sequence REGGSKSDSEDIT. Residues 190 to 279 are disordered; the sequence is REGGSKSDSE…KKRHKKRGIF (90 aa). The segment covering 203-213 has biased composition (polar residues); the sequence is RSANLTDQPSW. The homeobox; TALE-type DNA-binding region spans 272 to 334; sequence RHKKRGIFPK…NARRRIVQPM (63 aa). An interaction with DNA region spans residues 299 to 329; sequence YPSEEQKKQLAQDTGLTILQVNNWFINARRR. The required for transcriptional activation stretch occupies residues 335–390; the sequence is IDQSNRAVSQGTPYNPDGQPMGGFVMDGQQHMGIRAPGPMSGMGMNMGMEGQWHYM.

It belongs to the TALE/MEIS homeobox family. In terms of assembly, interacts with the N-terminal region of PBX1 to form a heterodimer which binds DNA including a cAMP-responsive sequence in CYP17. Also forms heterodimers with PBX2. Forms heterotrimers with PBX1 or PBX2 and a number of HOX proteins including HOXA9, HOXD4 and HOXD9 where it acts as a non-DNA-binding partner. Also forms heterotrimers with PBX1 and HOX proteins including HOXD9 and HOXD10 where PBX1 is the non-DNA-binding partner. Heterodimer with DLX3. Heterodimer with HOXB13. In terms of tissue distribution, expressed at low level in normal immunohepatopoietic tissues, including the fetal liver. Expressed in a subset of myeloid leukemia cell lines, with the highest expression seen in those with a megakaryocytic-erythroid phenotype. Also expressed at high levels in the cerebellum.

Its subcellular location is the nucleus. Acts as a transcriptional regulator of PAX6. Acts as a transcriptional activator of PF4 in complex with PBX1 or PBX2. Required for hematopoiesis, megakaryocyte lineage development and vascular patterning. May function as a cofactor for HOXA7 and HOXA9 in the induction of myeloid leukemias. The protein is Homeobox protein Meis1 (MEIS1) of Homo sapiens (Human).